The chain runs to 1499 residues: Condensin complex subunit 1 (1499 aa).

Disordered regions lie at residues 1–43 (MPRK…DGLS) and 1421–1499 (ITKN…MLDD). Residues 1432–1446 (PTTMSGSSRTTSRAA) show a composition bias toward low complexity. 2 stretches are compositionally biased toward acidic residues: residues 1458–1467 (SDEDDSDSDD) and 1486–1499 (ADDDSDSDEFMLDD).

It belongs to the CND1 (condensin subunit 1) family. As to quaternary structure, component of the condensin I complex, which contains the mix-1/SMC2 and smc-4/SMC4 heterodimer, and three non SMC subunits that probably regulate the complex: dpy-26, capg-1 and dpy-28. Within the complex, interacts with dpy-26 and smc-4. Component of the dosage compensation complex, which consist of the condensin I like components mix-1/SMC2 and dpy-27/SMC4, and the three non SMC subunits dpy-26, capg-1 and dpy-28. Within the complex, interacts with mix-1, dpy-27, dpy-26 and capg-1. Interacts with smcl-1. Post-translationally, sumoylated. Sumoylated in the context of the dosage compensation complex but not in the condensin I complex. Sumoylation is important for assembly of the dosage compensation complex and its robust binding to the X chromosome. Expressed in somatic and germline tissues (at protein level).

The protein resides in the nucleus. The protein localises to the chromosome. Required for both chromosome condensation and segregation during mitosis and meiosis and X-chromosome dosage compensation depending on its binding partners. Regulatory subunit of the condensin I complex, a complex required for conversion of interphase chromatin into mitotic-like condense chromosomes. The condensin I complex probably introduces positive supercoils into relaxed DNA in the presence of type I topoisomerases and converts nicked DNA into positive knotted forms in the presence of type II topoisomerases. The condensin I complex function is required for proper chromosome segregation in mitosis and meiosis. As a member of the condensin I complex, further controls the crossover number and distribution in meiosis by restricting double strand break formation, possibly by influencing higher-order chromosome structure. Plays a role in robust cytokinesis upon presence of chromatin obstructions. Also a member of the condensin I-like dosage compensation complex that associates specifically with hermaphrodite X chromosomes to reduce their gene transcription during interphase, possibly through chromatin reorganization. The polypeptide is Condensin complex subunit 1 (Caenorhabditis elegans).